The following is a 236-amino-acid chain: 1-(5-phosphoribosyl)-5-[(5-phosphoribosylamino)methylideneamino] imidazole-4-carboxamide isomerase (236 aa).

The active-site Proton acceptor is Asp8. The active-site Proton donor is the Asp128.

Belongs to the HisA/HisF family.

Its subcellular location is the cytoplasm. The catalysed reaction is 1-(5-phospho-beta-D-ribosyl)-5-[(5-phospho-beta-D-ribosylamino)methylideneamino]imidazole-4-carboxamide = 5-[(5-phospho-1-deoxy-D-ribulos-1-ylimino)methylamino]-1-(5-phospho-beta-D-ribosyl)imidazole-4-carboxamide. Its pathway is amino-acid biosynthesis; L-histidine biosynthesis; L-histidine from 5-phospho-alpha-D-ribose 1-diphosphate: step 4/9. The sequence is that of 1-(5-phosphoribosyl)-5-[(5-phosphoribosylamino)methylideneamino] imidazole-4-carboxamide isomerase from Nitrosopumilus maritimus (strain SCM1).